The sequence spans 439 residues: Histidinol dehydrogenase (439 aa).

NAD(+) contacts are provided by Tyr132, Gln194, and Asn217. Substrate is bound by residues Ser244, Gln266, and His269. 2 residues coordinate Zn(2+): Gln266 and His269. Residues Glu335 and His336 each act as proton acceptor in the active site. 4 residues coordinate substrate: His336, Asp369, Glu423, and His428. Asp369 is a binding site for Zn(2+). His428 is a binding site for Zn(2+).

The protein belongs to the histidinol dehydrogenase family. Zn(2+) is required as a cofactor.

It catalyses the reaction L-histidinol + 2 NAD(+) + H2O = L-histidine + 2 NADH + 3 H(+). Its pathway is amino-acid biosynthesis; L-histidine biosynthesis; L-histidine from 5-phospho-alpha-D-ribose 1-diphosphate: step 9/9. In terms of biological role, catalyzes the sequential NAD-dependent oxidations of L-histidinol to L-histidinaldehyde and then to L-histidine. This is Histidinol dehydrogenase (his2) from Schizosaccharomyces pombe (strain 972 / ATCC 24843) (Fission yeast).